The primary structure comprises 1318 residues: Ubiquitin carboxyl-terminal hydrolase 19 (1318 aa).

The interval 1-109 (MSGGASATGP…GACEDPHDLL (109 aa)) is disordered. Residues 1-1291 (MSGGASATGP…TTPDEGCLRY (1291 aa)) are Cytoplasmic-facing. Residues 28–44 (DRANQESKDGDPRKETG) are compositionally biased toward basic and acidic residues. Polar residues predominate over residues 83 to 94 (PSSSGSASTPQE). The span at 95–107 (EQTKEGACEDPHD) shows a compositional bias: basic and acidic residues. Positions 113–202 (TPELLLDWRQ…VPMLTWPSLL (90 aa)) constitute a CS 1 domain. A disordered region spans residues 234-255 (KAVPPGNDPVSPAMVRSRNPGK). Phosphoserine is present on Ser-244. A CS 2 domain is found at 282-384 (LAFVKNDSYE…RQSQRWGGLE (103 aa)). Residues 390-479 (VGGAKVAVPT…PMPHSPVSGD (90 aa)) form a disordered region. Basic and acidic residues-rich tracts occupy residues 420 to 436 (EEARAVEKDKSKARSED) and 447 to 457 (PMEHVTPKPET). The 718-residue stretch at 497 to 1214 (TGLVNLGNTC…YAYVLFYRRR (718 aa)) folds into the USP domain. Cys-506 serves as the catalytic Nucleophile. Cys-791, Cys-794, Cys-808, Cys-811, Cys-817, Cys-821, His-829, and Cys-833 together coordinate Zn(2+). The MYND-type zinc-finger motif lies at 791-833 (CAACQRKQQSEDEKLKRCTRCYRVGYCNQLCQKTHWPDHKGLC). The Proton acceptor role is filled by His-1165. Positions 1218–1232 (VERPPRAGHSEHHPD) are enriched in basic and acidic residues. Residues 1218–1239 (VERPPRAGHSEHHPDLGPAAEA) form a disordered region. The helical transmembrane segment at 1292-1312 (FVLGTVAALVALVLNVFYPLV) threads the bilayer. Over 1313 to 1318 (SQSRWR) the chain is Lumenal.

It belongs to the peptidase C19 family. In terms of assembly, interacts with RNF123. Interacts with BIRC2/c-IAP1, BIRC3/c-IAP2 and XIAP/BIRC4. Interacts with HIF1A (via N-terminus). Interacts (via N-terminus) with HSP90AA1; this interaction activates the deubiquitinase activity of USP19.

The protein resides in the endoplasmic reticulum membrane. It carries out the reaction Thiol-dependent hydrolysis of ester, thioester, amide, peptide and isopeptide bonds formed by the C-terminal Gly of ubiquitin (a 76-residue protein attached to proteins as an intracellular targeting signal).. Its function is as follows. Deubiquitinating enzyme that regulates the degradation of various proteins by removing ubiquitin moieties, thereby preventing their proteasomal degradation. Stabilizes RNF123, which promotes CDKN1B degradation and contributes to cell proliferation. Decreases the levels of ubiquitinated proteins during skeletal muscle formation and acts to repress myogenesis. Modulates transcription of major myofibrillar proteins. Also involved in turnover of endoplasmic-reticulum-associated degradation (ERAD) substrates. Mechanistically, deubiquitinates and thereby stabilizes several E3 ligases involved in the ERAD pathway including SYVN1 or MARCHF6. Regulates the stability of other E3 ligases including BIRC2/c-IAP1 and BIRC3/c-IAP2 by preventing their ubiquitination. Required for cells to mount an appropriate response to hypoxia by rescuing HIF1A from degradation in a non-catalytic manner and by mediating the deubiquitination of FUNDC1. Attenuates mitochondrial damage and ferroptosis by targeting and stabilizing NADPH oxidase 4/NOX4. Negatively regulates TNF-alpha- and IL-1beta-triggered NF-kappa-B activation by hydrolyzing 'Lys-27'- and 'Lys-63'-linked polyubiquitin chains from MAP3K7. Modulates also the protein level and aggregation of polyQ-expanded huntingtin/HTT through HSP90AA1. This Homo sapiens (Human) protein is Ubiquitin carboxyl-terminal hydrolase 19 (USP19).